A 447-amino-acid polypeptide reads, in one-letter code: Rab GDP dissociation inhibitor alpha (447 aa).

It belongs to the Rab GDI family. In terms of assembly, interacts with RHOH. Interacts with the non-phosphorylated forms of RAB1A, RAB3A, RAB5A, RAB5B, RAB5C, RAB8A, RAB8B, RAB10, RAB12, RAB35, and RAB43.

The protein resides in the cytoplasm. Its subcellular location is the golgi apparatus. It localises to the trans-Golgi network. Regulates the GDP/GTP exchange reaction of most Rab proteins by inhibiting the dissociation of GDP from them, and the subsequent binding of GTP to them. Promotes the dissociation of GDP-bound Rab proteins from the membrane and inhibits their activation. Promotes the dissociation of RAB1A, RAB3A, RAB5A and RAB10 from membranes. This is Rab GDP dissociation inhibitor alpha (GDI1) from Macaca fascicularis (Crab-eating macaque).